The following is an 86-amino-acid chain: Large ribosomal subunit protein uL24 (86 aa).

It belongs to the universal ribosomal protein uL24 family. As to quaternary structure, part of the 50S ribosomal subunit.

In terms of biological role, one of two assembly initiator proteins, it binds directly to the 5'-end of the 23S rRNA, where it nucleates assembly of the 50S subunit. Its function is as follows. One of the proteins that surrounds the polypeptide exit tunnel on the outside of the subunit. This chain is Large ribosomal subunit protein uL24, found in Bdellovibrio bacteriovorus (strain ATCC 15356 / DSM 50701 / NCIMB 9529 / HD100).